A 488-amino-acid chain; its full sequence is MELLLLLLSTLLILTLCCHFFYLFIRTNKQNGSEKLPLPPGHVSWPFKYFETLDYLKKARTNTIHKFIAERVQKYKTKCFKTCHIGQNMVFLTSAEGNKFLFSNDYKLVRSWWPVTFLKVFENAGEEITVEEVIRARKQFLSFFNEPDALARHVAITDQVVQDHFKCYWDGSKQVGVYPLARKLTFDVSCRLLADIQDREILDESLPLMGNVVRAFFAFPINFPGTILNRAIKSSRRLRKIFVDIIKERRGDLLEKKNLDQRNDVLSRLLVENYKEGRDIDDVFLAKNLVSLLSAAYDNPSVTITSIVKNLAERPEIYEKVRKEQIEIAKSKAPGEHMSMEDVKKMKFSMNVLSESLRLEAPASGTFREALDDFNYEGFLIPKGWKVHWSVHATHRNPEYFSNPETFDPSRFERNDPIVPYSYVPFGGGHHICPGKDYAKLQILLFMHHVVRKFKWEKVNPDEQLIRAPNLFAPKGLPVRLYPYAYEN.

Residues Leu5–Ile25 traverse the membrane as a helical segment. Cys433 serves as a coordination point for heme.

It belongs to the cytochrome P450 family. Heme is required as a cofactor. As to expression, expressed in maturing fruits and in juice vesicles.

The protein localises to the membrane. It carries out the reaction (1R,2R,3S,8R,10R,11R,15S,16S)-3-(acetyloxy)-15-[(4R)-4-[(2S)-3,3-dimethyloxiran-2-yl]-1,4-dihydroxybutan-2-yl]-2,7,7,11,16-pentamethyl-5-oxo-6-oxatetracyclo[9.7.0.0(2,8).0(12,16)]octadec-12-en-10-yl acetate + reduced [NADPH--hemoprotein reductase] + O2 = (1R,2R,3S,8R,10R,11R,15S,16S)-3-(acetyloxy)-15-(1-hydroxy-4-oxobutan-2-yl)-2,7,7,11,16-pentamethyl-5-oxo-6-oxatetracyclo[9.7.0.0(2,8).0(12,16)]octadec-12-en-10-yl acetate + 2-methylpropanoate + oxidized [NADPH--hemoprotein reductase] + H2O + 2 H(+). It functions in the pathway secondary metabolite biosynthesis; terpenoid biosynthesis. Its function is as follows. Monooxygenase involved in the biosynthesis of limonoids triterpene natural products such as limonin, a compound with insecticidal activity responsible for the bitter taste in citrus. Catalyzes the formation of (1R,2R,3S,8R,10R,11R,15S,16S)-3-(acetyloxy)-15-(1-hydroxy-4-oxobutan-2-yl)-2,7,7,11,16-pentamethyl-5-oxo-6-oxatetracyclo[9.7.0.0(2,8).0(12,16)]octadec-12-en-10-yl acetate. The polypeptide is Cytochrome P450 family 716 subfamily AD polypeptide 2 (Citrus sinensis (Sweet orange)).